Consider the following 1186-residue polypeptide: ATP-dependent helicase/deoxyribonuclease subunit B (1186 aa).

The protein belongs to the helicase family. AddB/RexB type 2 subfamily. In terms of assembly, heterodimer of AddA and RexB. It depends on Mg(2+) as a cofactor.

Functionally, the heterodimer acts as both an ATP-dependent DNA helicase and an ATP-dependent, dual-direction single-stranded exonuclease. Recognizes the chi site generating a DNA molecule suitable for the initiation of homologous recombination. This subunit has 5' -&gt; 3' nuclease activity but not helicase activity. This is ATP-dependent helicase/deoxyribonuclease subunit B from Latilactobacillus sakei subsp. sakei (strain 23K) (Lactobacillus sakei subsp. sakei).